The chain runs to 381 residues: Gustatory and pheromone receptor 39a, isoform D (381 aa).

Residues Met-1–Ala-43 are Cytoplasmic-facing. A helical transmembrane segment spans residues Trp-44–Phe-64. Residues Pro-65–Asn-78 are Extracellular-facing. The N-linked (GlcNAc...) asparagine glycan is linked to Asn-74. The chain crosses the membrane as a helical span at residues Cys-79–Ile-101. Topologically, residues Gln-102–Arg-128 are cytoplasmic. Residues Phe-129–Tyr-149 traverse the membrane as a helical segment. The Extracellular portion of the chain corresponds to Gly-150–Tyr-172. Residues Leu-173–Leu-193 form a helical membrane-spanning segment. Residues Lys-194–Cys-234 lie on the Cytoplasmic side of the membrane. Residues Phe-235–Phe-255 traverse the membrane as a helical segment. The Extracellular portion of the chain corresponds to Tyr-256 to Ser-273. Residues Leu-274–Met-294 form a helical membrane-spanning segment. Over Gly-295–Thr-350 the chain is Cytoplasmic. Residues Leu-351–Met-371 form a helical membrane-spanning segment. Residues Glu-372–Phe-381 lie on the Extracellular side of the membrane. An N-linked (GlcNAc...) asparagine glycan is attached at Asn-373.

It belongs to the insect chemoreceptor superfamily. Gustatory receptor (GR) family. Gr21a subfamily. Expressed in the adult labellar chemosensory neurons and adult thorax and abdomen.

It localises to the cell membrane. Functionally, gustatory receptor which mediates acceptance or avoidance behavior, depending on its substrates. Plays a role in sustaining courtship behavior in males, possibly through the reception of a stimulating arrestant pheromone. The chain is Gustatory and pheromone receptor 39a, isoform D (Gr39a) from Drosophila melanogaster (Fruit fly).